We begin with the raw amino-acid sequence, 182 residues long: Inner membrane-spanning protein YciB (182 aa).

Transmembrane regions (helical) follow at residues 22–42 (IYIA…VTYA), 50–70 (MHLI…IFHD), 72–92 (AFIK…LAVS), 118–138 (VTWY…YVAF), and 148–168 (FKVF…VVYL).

This sequence belongs to the YciB family.

It localises to the cell inner membrane. Its function is as follows. Plays a role in cell envelope biogenesis, maintenance of cell envelope integrity and membrane homeostasis. In Shewanella woodyi (strain ATCC 51908 / MS32), this protein is Inner membrane-spanning protein YciB.